A 326-amino-acid polypeptide reads, in one-letter code: Protein farnesyltransferase/geranylgeranyltransferase type-1 subunit alpha (326 aa).

PFTA repeat units lie at residues 55-89 (RSPRALRLTEETLLLNSGNYTVWHFRRLVLEALNH), 90-124 (DLFEELEFIERIAEDNSKNYQLWHHRRWVAEKLGP), 126-160 (VAGRELEFTRRVLSLDAKHYHAWSHRQWTLRALGG), 161-194 (WEDELDYCHELLEADVFNNSAWNQRYYVITQSPL), and 201-235 (MRESEVSYTIKAILTNPANESSWRYLKALYKDDKE).

Belongs to the protein prenyltransferase subunit alpha family. Heterodimer of an alpha and a beta subunit. It depends on Mg(2+) as a cofactor.

The catalysed reaction is L-cysteinyl-[protein] + (2E,6E)-farnesyl diphosphate = S-(2E,6E)-farnesyl-L-cysteinyl-[protein] + diphosphate. It carries out the reaction geranylgeranyl diphosphate + L-cysteinyl-[protein] = S-geranylgeranyl-L-cysteinyl-[protein] + diphosphate. In terms of biological role, essential subunit of both the farnesyltransferase and the geranylgeranyltransferase complex. Contributes to the transfer of a farnesyl or geranylgeranyl moiety from farnesyl or geranylgeranyl diphosphate to a cysteine at the fourth position from the C-terminus of several proteins having the C-terminal sequence Cys-aliphatic-aliphatic-X. This is Protein farnesyltransferase/geranylgeranyltransferase type-1 subunit alpha (FTA) from Arabidopsis thaliana (Mouse-ear cress).